The following is a 267-amino-acid chain: Octanoyltransferase (267 aa).

Residues 77-265 form the BPL/LPL catalytic domain; it reads GTASELVWLV…AFESVFGPRQ (189 aa). Residues 116–123, 196–198, and 209–211 each bind substrate; these read RGGEYTYH, AIG, and GIA. Catalysis depends on C227, which acts as the Acyl-thioester intermediate.

This sequence belongs to the LipB family.

Its subcellular location is the cytoplasm. It carries out the reaction octanoyl-[ACP] + L-lysyl-[protein] = N(6)-octanoyl-L-lysyl-[protein] + holo-[ACP] + H(+). The protein operates within protein modification; protein lipoylation via endogenous pathway; protein N(6)-(lipoyl)lysine from octanoyl-[acyl-carrier-protein]: step 1/2. In terms of biological role, catalyzes the transfer of endogenously produced octanoic acid from octanoyl-acyl-carrier-protein onto the lipoyl domains of lipoate-dependent enzymes. Lipoyl-ACP can also act as a substrate although octanoyl-ACP is likely to be the physiological substrate. This Brucella suis biovar 1 (strain 1330) protein is Octanoyltransferase.